A 93-amino-acid polypeptide reads, in one-letter code: Cell division protein CrgA (93 aa).

The next 2 membrane-spanning stretches (helical) occupy residues 31–51 (VWFV…LMVF) and 70–90 (LGPW…LLTM).

The protein belongs to the CrgA family.

Its subcellular location is the cell membrane. Its function is as follows. Involved in cell division. The protein is Cell division protein CrgA of Mycobacterium leprae (strain Br4923).